The following is a 601-amino-acid chain: Secretogranin-2 (601 aa).

The signal sequence occupies residues 1–30 (MSSQRNYCLAGCLSSCILVILMSFSDAASF). Residues 89 to 109 (EQKDTQALSTDTAKSPTSDDE) are disordered. Positions 93-104 (TQALSTDTAKSP) are enriched in polar residues. Sulfotyrosine is present on Y151. The span at 258–273 (VESQTQEELKESKEEV) shows a compositional bias: basic and acidic residues. The segment at 258-307 (VESQTQEELKESKEEVEKTDDMEDEIKRSGLLGLQDEEPEKDTKEQESEN) is disordered.

Belongs to the chromogranin/secretogranin protein family.

It is found in the secreted. Its function is as follows. Neuroendocrine protein of the granin family that regulates the biogenesis of secretory granules. This chain is Secretogranin-2, found in Pelophylax ridibundus (Marsh frog).